Reading from the N-terminus, the 131-residue chain is Small ribosomal subunit protein uS12 (131 aa).

A 3-methylthioaspartic acid modification is found at Asp-89. The interval 106-131 (GVDGRKQGRSKYGAKKAKVAKTASAK) is disordered. Positions 112–124 (QGRSKYGAKKAKV) are enriched in basic residues.

This sequence belongs to the universal ribosomal protein uS12 family. As to quaternary structure, part of the 30S ribosomal subunit. Contacts proteins S8 and S17. May interact with IF1 in the 30S initiation complex.

With S4 and S5 plays an important role in translational accuracy. Its function is as follows. Interacts with and stabilizes bases of the 16S rRNA that are involved in tRNA selection in the A site and with the mRNA backbone. Located at the interface of the 30S and 50S subunits, it traverses the body of the 30S subunit contacting proteins on the other side and probably holding the rRNA structure together. The combined cluster of proteins S8, S12 and S17 appears to hold together the shoulder and platform of the 30S subunit. The chain is Small ribosomal subunit protein uS12 from Endomicrobium trichonymphae.